The sequence spans 195 residues: Small ribosomal subunit protein uS4 (195 aa).

The S4 RNA-binding domain occupies 88-150; the sequence is RRLENVVYRL…SKNVELIKLA (63 aa).

The protein belongs to the universal ribosomal protein uS4 family. As to quaternary structure, part of the 30S ribosomal subunit. Contacts protein S5. The interaction surface between S4 and S5 is involved in control of translational fidelity.

In terms of biological role, one of the primary rRNA binding proteins, it binds directly to 16S rRNA where it nucleates assembly of the body of the 30S subunit. Functionally, with S5 and S12 plays an important role in translational accuracy. In Fusobacterium nucleatum subsp. nucleatum (strain ATCC 25586 / DSM 15643 / BCRC 10681 / CIP 101130 / JCM 8532 / KCTC 2640 / LMG 13131 / VPI 4355), this protein is Small ribosomal subunit protein uS4.